The sequence spans 1240 residues: Serine/threonine-protein kinase TAO2 (1240 aa).

Ser-9 carries the phosphoserine modification. The Protein kinase domain occupies 28–281 (FSDLREIGHG…SEVLLKHRFV (254 aa)). ATP-binding positions include 34 to 42 (IGHGSFGAV) and Lys-57. The active-site Proton acceptor is the Asp-151. The residue at position 181 (Ser-181) is a Phosphoserine. A disordered region spans residues 320 to 463 (APNGPGAEAP…PTSTSSSARR (144 aa)). A compositionally biased stretch (low complexity) spans 356–380 (SSHSVPSMSISASSQSSSVNSLADA). Residues 381–401 (SDNEEEEEEEEEEEEEEEEEG) are compositionally biased toward acidic residues. Residues 402–417 (PESREMAMMQEGEHTV) are compositionally biased toward basic and acidic residues. Ser-422 is modified (phosphoserine). 2 coiled-coil regions span residues 493-528 (SALR…EEHS) and 581-608 (KELA…LQEN). Ser-663 carries the post-translational modification Phosphoserine. Residues 688 to 720 (LRQHEATRELELRQLQAVQRTRAELTRLQHQTE) are a coiled coil. Phosphoserine occurs at positions 782, 830, and 832. Residues 805 to 934 (RILGKEGTTL…GDGCPSPDIP (130 aa)) are a coiled coil. The segment at 899–946 (VLTPVPEEEEEEEEEGGAPIGTHRDPGDGCPSPDIPPEPPPSHLRQYP) is disordered. Residues 904 to 914 (PEEEEEEEEEG) are compositionally biased toward acidic residues. Over residues 931–940 (PDIPPEPPPS) the composition is skewed to pro residues. 5 helical membrane passes run 972–992 (LLPL…GGGL), 994–1014 (AALL…LFLC), 1019–1039 (LPPG…VLSL), 1045–1065 (LMGV…SLAL), and 1175–1195 (LASC…LLKG). Position 999 is an omega-N-methylarginine (Leu-999). Residue Leu-1037 is modified to Phosphoserine. The interval 1212 to 1240 (LGLSASRQLPPGTVAGRRSQTRRTLPPWR) is disordered.

Belongs to the protein kinase superfamily. STE Ser/Thr protein kinase family. STE20 subfamily. Interacts with MAP2K3 and MAP2K6. Self-associates. Interacts with tubulins. Interacts with MAP3K7 and interferes with MAP3K7-binding to CHUK and thus prevents NF-kappa-B activation. Isoform 2 interacts with PCDH8; this complex may also include CDH2. Mg(2+) is required as a cofactor. Post-translationally, autophosphorylated. Phosphorylated by ATM. Phosphorylated on Ser-1037 by MAPK14. This phosphorylation is required PCDH8 for endocytosis.

Its subcellular location is the cytoplasmic vesicle membrane. It is found in the cytoplasm. The protein resides in the cytoskeleton. It localises to the cell projection. The protein localises to the dendrite. It carries out the reaction L-seryl-[protein] + ATP = O-phospho-L-seryl-[protein] + ADP + H(+). The enzyme catalyses L-threonyl-[protein] + ATP = O-phospho-L-threonyl-[protein] + ADP + H(+). In terms of biological role, serine/threonine-protein kinase involved in different processes such as membrane blebbing and apoptotic bodies formation DNA damage response and MAPK14/p38 MAPK stress-activated MAPK cascade. Phosphorylates itself, MBP, activated MAPK8, MAP2K3, MAP2K6 and tubulins. Activates the MAPK14/p38 MAPK signaling pathway through the specific activation and phosphorylation of the upstream MAP2K3 and MAP2K6 kinases. In response to DNA damage, involved in the G2/M transition DNA damage checkpoint by activating the p38/MAPK14 stress-activated MAPK cascade, probably by mediating phosphorylation of upstream MAP2K3 and MAP2K6 kinases. May affect microtubule organization and stability. May play a role in the osmotic stress-MAPK8 pathway. Prevents MAP3K7-mediated activation of CHUK, and thus NF-kappa-B activation. Isoform 2, but not isoform 1, is required for PCDH8 endocytosis. Following homophilic interactions between PCDH8 extracellular domains, isoform 2 phosphorylates and activates MAPK14/p38 MAPK which in turn phosphorylates isoform 2. This process leads to PCDH8 endocytosis and CDH2 cointernalization. Both isoforms are involved in MAPK14/p38 MAPK activation. This chain is Serine/threonine-protein kinase TAO2 (Taok2), found in Mus musculus (Mouse).